Reading from the N-terminus, the 413-residue chain is BEN domain-containing protein 7 (413 aa).

Glycyl lysine isopeptide (Lys-Gly) (interchain with G-Cter in SUMO2) cross-links involve residues Lys-16, Lys-56, and Lys-85. Positions Gly-78 to Pro-88 are enriched in basic and acidic residues. Disordered stretches follow at residues Gly-78–Pro-153 and Arg-208–Lys-243. Composition is skewed to polar residues over residues Leu-99–Pro-111 and Pro-121–Pro-153. Over residues Val-211–Pro-222 the composition is skewed to basic residues. Over residues Pro-223–Lys-232 the composition is skewed to low complexity. Residue Lys-243 forms a Glycyl lysine isopeptide (Lys-Gly) (interchain with G-Cter in SUMO2) linkage. One can recognise a BEN domain in the interval Gly-287–Arg-392. At Thr-324 the chain carries Phosphothreonine. Ser-328 carries the phosphoserine modification.

In Homo sapiens (Human), this protein is BEN domain-containing protein 7 (BEND7).